The following is an 83-amino-acid chain: Protein L83L (83 aa).

Positions 1-10 (MDTSLKNNDG) are enriched in polar residues. Residues 1–25 (MDTSLKNNDGASEADNKNYQDYKDE) are disordered. The span at 14 to 25 (ADNKNYQDYKDE) shows a compositional bias: basic and acidic residues.

The protein belongs to the asfivirus L83L family. As to quaternary structure, interacts with host IL1B.

Its subcellular location is the host cytoplasm. Its function is as follows. May subvert the host innate immune response by interacting with host IL1B and interfering with its function. This chain is Protein L83L, found in Ornithodoros (relapsing fever ticks).